The following is a 274-amino-acid chain: Large ribosomal subunit protein uL2cz (274 aa).

Disordered regions lie at residues 1-25 and 224-274; these read MAIH…VKSN and NPVD…RRSK. Polar residues predominate over residues 7–25; sequence KTSTPSTRNGTVDSQVKSN.

Belongs to the universal ribosomal protein uL2 family. As to quaternary structure, part of the 50S ribosomal subunit.

It localises to the plastid. The protein resides in the chloroplast. This is Large ribosomal subunit protein uL2cz (rpl2-A) from Coffea arabica (Arabian coffee).